Consider the following 66-residue polypeptide: Large ribosomal subunit protein bL35 (66 aa).

Basic residues-rich tracts occupy residues 1-26 (MPKM…KRSH) and 38-48 (QKQKRKLRKSA). A disordered region spans residues 1–48 (MPKMKTHKGAAKRFKKTGSGKLKRSHAFTSHLFANKSQKQKRKLRKSA).

This sequence belongs to the bacterial ribosomal protein bL35 family.

The polypeptide is Large ribosomal subunit protein bL35 (Halalkalibacterium halodurans (strain ATCC BAA-125 / DSM 18197 / FERM 7344 / JCM 9153 / C-125) (Bacillus halodurans)).